Consider the following 529-residue polypeptide: Listeriolysin O (529 aa).

A signal peptide spans 1 to 24 (MKKIMLVFITLILVSLPIAQQTEA). The interval 35–54 (SISSMAPPASPPASPKTPIE) is disordered. Transmembrane regions (beta stranded) follow at residues 214 to 227 (ESQL…AFKA), 234 to 243 (VNFGAISEGK), 312 to 321 (STKVKAAFDA), and 329 to 341 (SGDV…IKNS). The short motif at 483–493 (ECTGLAWEWWR) is the Conserved undecapeptide element. The Cholesterol binding signature appears at 515 to 516 (TL).

This sequence belongs to the cholesterol-dependent cytolysin family. In terms of assembly, homooligomeric pore complex of 35 to 50 subunits; when inserted in the host membrane.

It localises to the secreted. The protein localises to the host membrane. The protein resides in the host cell membrane. With respect to regulation, activity of listeriolysin O is regulated on multiple levels. It should be high in the phagosome, thereby allowing escape of the bacteria from the phagosomal compartment. Then, once inside the host cytosol, the activity must be controlled to prevent lysis of the host plasma membrane and loss of the intracellular environment. Functionally, a cholesterol-dependent toxin that causes cytolysis by forming pores in cholesterol containing host membranes. After binding to target membranes, the protein undergoes a major conformation change, leading to its insertion in the host membrane and formation of an oligomeric pore complex. Cholesterol is required for binding to host membranes, membrane insertion and pore formation; cholesterol binding is mediated by a Thr-Leu pair in the C-terminus. Acts as a major virulence factor required for the escape of bacteria from phagosomal vacuoles and entry into the host cytosol. Can be reversibly inactivated by oxidation. The chain is Listeriolysin O (hly) from Listeria monocytogenes serotype 1/2a (strain 08-5578).